We begin with the raw amino-acid sequence, 424 residues long: MAFLALGINHKTASVDVRERVAFTPEQLVEALQQLCRLTDSREAAILSTCNRSELYIEQDHLSADVVLRWLAEYHHLSLDELRASAYVHEDDAAVRHMMRVASGLDSLVLGEPQILGQMKSAYAVAREAGTVGPLLGRLFQATFSAAKQVRTDTAIGENPVSVAFAAVSLAKQIFSDLQRSQALLIGAGETITLVARHLHDLGVKRIVVANRTLERASLLAEQFGAHAVLLSDIPQELVHSDIVISSTASQLPILGKGAVESALKLRKHKPIFMVDIAVPRDIEPEVGELDDVYLYTVDDLHEVVAENLKSRQGAAQAAEELVNIGAEDFMVRLRELAAVDVLKAYRQQSERLRDEELQKALRMLANGSGAEDVLAQLARGLTNKLLHAPSVQLKKLSAEGRLDALAMAQELFALGEGSSDKTP.

Residues 49–52 (TCNR), serine 107, 112–114 (EPQ), and glutamine 118 each bind substrate. Cysteine 50 acts as the Nucleophile in catalysis. 187 to 192 (GAGETI) is a binding site for NADP(+).

It belongs to the glutamyl-tRNA reductase family. Homodimer.

The enzyme catalyses (S)-4-amino-5-oxopentanoate + tRNA(Glu) + NADP(+) = L-glutamyl-tRNA(Glu) + NADPH + H(+). It functions in the pathway porphyrin-containing compound metabolism; protoporphyrin-IX biosynthesis; 5-aminolevulinate from L-glutamyl-tRNA(Glu): step 1/2. Functionally, catalyzes the NADPH-dependent reduction of glutamyl-tRNA(Glu) to glutamate 1-semialdehyde (GSA). In Pseudomonas fluorescens (strain ATCC BAA-477 / NRRL B-23932 / Pf-5), this protein is Glutamyl-tRNA reductase.